The following is a 272-amino-acid chain: U11/U12 small nuclear ribonucleoprotein 35 kDa protein (272 aa).

Residues 51 to 129 (LTLFVSRLSP…REVFVDFELE (79 aa)) form the RRM domain. 2 stretches are compositionally biased toward basic and acidic residues: residues 146–162 (GKKE…DRPF) and 190–272 (RDRS…EHNR). Residues 146–272 (GKKESGQLRF…RKHRSDEHNR (127 aa)) form a disordered region. A coiled-coil region spans residues 221-258 (TKDDKEQNAEHTKRERSREQAKNDKDKEKKDSKRERSR).

It is found in the nucleus. The sequence is that of U11/U12 small nuclear ribonucleoprotein 35 kDa protein (snrnp35) from Xenopus laevis (African clawed frog).